We begin with the raw amino-acid sequence, 553 residues long: Phospholipase B (553 aa).

A signal peptide spans 1 to 35 (MIRFGNPSSSDKRRQRCRSWYWGGLLLLWAVAETR). 3 N-linked (GlcNAc...) asparagine glycosylation sites follow: Asn313, Asn416, and Asn531.

Belongs to the phospholipase B-like family. Expressed by the venom gland.

Its subcellular location is the secreted. In terms of biological role, may cause hemolysis or may be involved in protein folding and translation. This is Phospholipase B from Crotalus adamanteus (Eastern diamondback rattlesnake).